The primary structure comprises 265 residues: 4-hydroxy-2-oxo-heptane-1,7-dioate aldolase (265 aa).

Residue His-45 is the Proton acceptor of the active site. Position 147 (Gln-147) interacts with substrate. An a divalent metal cation-binding site is contributed by Glu-149. Residues Ala-174 and Asp-175 each contribute to the substrate site. Asp-175 is an a divalent metal cation binding site.

It belongs to the HpcH/HpaI aldolase family. In terms of assembly, homohexamer; trimer of dimers. A divalent metal cation is required as a cofactor.

The enzyme catalyses 4-hydroxy-2-oxoheptanedioate = succinate semialdehyde + pyruvate. It functions in the pathway aromatic compound metabolism; 4-hydroxyphenylacetate degradation; pyruvate and succinate semialdehyde from 4-hydroxyphenylacetate: step 7/7. Catalyzes the reversible retro-aldol cleavage of 4-hydroxy-2-ketoheptane-1,7-dioate (HKHD) to pyruvate and succinic semialdehyde. The sequence is that of 4-hydroxy-2-oxo-heptane-1,7-dioate aldolase from Klebsiella pneumoniae subsp. pneumoniae (strain ATCC 700721 / MGH 78578).